A 249-amino-acid polypeptide reads, in one-letter code: Glycoprotein 2a (249 aa).

An N-terminal signal peptide occupies residues 1–35 (MQWGHCGVKSASCSWTPSLSSLLVWLILPFSLPYC). At 36-207 (LGSPSQDGYW…LTDFRQWLIS (172 aa)) the chain is on the virion surface side. 2 N-linked (GlcNAc...) asparagine; by host glycosylation sites follow: Asn173 and Asn179. The helical transmembrane segment at 208–228 (VHASIFSSVASSVTLFIVLWL) threads the bilayer. Residues 229 to 249 (RIPALRYVFGFHWPTATHHSS) lie on the Intravirion side of the membrane.

As to quaternary structure, heterotrimer of GP2a, GP3, and GP4. The GP2a-GP3-GP4 complex associates with the E protein. Interacts with host CD163; this interaction plays a role in virus entry into host cell.

It is found in the virion membrane. It localises to the host endoplasmic reticulum membrane. Its subcellular location is the host Golgi apparatus membrane. The protein localises to the secreted. Its function is as follows. Minor envelope protein. Along with GP4, serves as the viral attachment protein responsible for mediating interactions with CD163 thereby playing a role in virus entry into susceptible host cells. This is Glycoprotein 2a (GP2a) from Porcine reproductive and respiratory syndrome virus (strain Lelystad) (PRRSV).